A 131-amino-acid polypeptide reads, in one-letter code: MMRSFKSTQEPSRQARGAQAEDRALAHLRRQGLEPVVRNYRCKGGEIDLVMRAPDGTLVFVEVRQRSGRGFGGAAASITPAKQRRVVLAARHYLATLARVPPCRFDVVALEPDRLEWLQHAFDADAAGAGS.

Residues 1–12 (MMRSFKSTQEPS) show a composition bias toward polar residues. The tract at residues 1-21 (MMRSFKSTQEPSRQARGAQAE) is disordered.

Belongs to the UPF0102 family.

This Cupriavidus taiwanensis (strain DSM 17343 / BCRC 17206 / CCUG 44338 / CIP 107171 / LMG 19424 / R1) (Ralstonia taiwanensis (strain LMG 19424)) protein is UPF0102 protein RALTA_A3032.